The sequence spans 201 residues: 3-isopropylmalate dehydratase small subunit (201 aa).

This sequence belongs to the LeuD family. LeuD type 1 subfamily. In terms of assembly, heterodimer of LeuC and LeuD.

The enzyme catalyses (2R,3S)-3-isopropylmalate = (2S)-2-isopropylmalate. Its pathway is amino-acid biosynthesis; L-leucine biosynthesis; L-leucine from 3-methyl-2-oxobutanoate: step 2/4. In terms of biological role, catalyzes the isomerization between 2-isopropylmalate and 3-isopropylmalate, via the formation of 2-isopropylmaleate. In Jannaschia sp. (strain CCS1), this protein is 3-isopropylmalate dehydratase small subunit.